Reading from the N-terminus, the 680-residue chain is Probable inactive DNA (cytosine-5)-methyltransferase DRM3 (680 aa).

A disordered region spans residues 1-24; it reads MVKVEDDVEGSGINASVGDLRDAA. Residues 45 to 86 form the UBA 1 domain; sequence SSSSHVRSQFIGMGFSPMLVDRVLQKHGDRDSDTILEALLSQ. Positions 91 to 113 are disordered; it reads KSGSESGSLGDLFDSDNEENSSH. The UBA 2 domain occupies 194–235; it reads SLFGVMDKTLHLLQMGFTEEEVSSVIDKAGPEATVLELADTI. The 328-residue stretch at 336–663 folds into the SAM-dependent MTase DRM-type domain; it reads IRRNVRSDVA…QRVKHIMGRL (328 aa).

Belongs to the class I-like SAM-binding methyltransferase superfamily. DRM-methyltransferase family.

Its subcellular location is the nucleus. Involved in de novo DNA methylation. Involved in RNA-directed DNA methylation (RdDM). The polypeptide is Probable inactive DNA (cytosine-5)-methyltransferase DRM3 (Oryza sativa subsp. japonica (Rice)).